Here is a 235-residue protein sequence, read N- to C-terminus: Phosphoribosylaminoimidazole-succinocarboxamide synthase (235 aa).

Belongs to the SAICAR synthetase family.

It carries out the reaction 5-amino-1-(5-phospho-D-ribosyl)imidazole-4-carboxylate + L-aspartate + ATP = (2S)-2-[5-amino-1-(5-phospho-beta-D-ribosyl)imidazole-4-carboxamido]succinate + ADP + phosphate + 2 H(+). Its pathway is purine metabolism; IMP biosynthesis via de novo pathway; 5-amino-1-(5-phospho-D-ribosyl)imidazole-4-carboxamide from 5-amino-1-(5-phospho-D-ribosyl)imidazole-4-carboxylate: step 1/2. The chain is Phosphoribosylaminoimidazole-succinocarboxamide synthase from Clostridium botulinum (strain Alaska E43 / Type E3).